Consider the following 282-residue polypeptide: PILR alpha-associated neural protein (282 aa).

An N-terminal signal peptide occupies residues 1–31 (MESRMWPALLLSHLLPLWPLLLLPLPPPAQG). The disordered stretch occupies residues 28 to 99 (PAQGSSSSPR…PSGFEEGPPS (72 aa)). At 32–178 (SSSSPRTPPA…FGGRGEGVDP (147 aa)) the chain is on the extracellular side. The span at 46 to 56 (PCARGGPSAPR) shows a compositional bias: low complexity. O-linked (GalNAc...) threonine glycosylation occurs at threonine 140. A helical transmembrane segment spans residues 179–199 (QLYVTITISIIIVLVATGIIF). Topologically, residues 200–282 (KFCWDRSQKR…QLNRIPLVNL (83 aa)) are cytoplasmic. Positions 209–282 (RRRPSGQQGA…QLNRIPLVNL (74 aa)) are disordered. The segment covering 213 to 229 (SGQQGALRQEESQQPLT) has biased composition (polar residues).

In terms of processing, O-glycosylation at Thr-140 is essential for recognition by PILRA. As to expression, mainly expressed in adult brain and cerebellum. Weaker expression in fetal brain and virtually no expression in spleen, heart, kidney, liver and dorsal ganglion relative to brain.

It is found in the membrane. Its function is as follows. Acts as a ligand for PILRA in neural tissues, where it may be involved in immune regulation. This is PILR alpha-associated neural protein (PIANP) from Homo sapiens (Human).